The chain runs to 204 residues: Golgi to ER traffic protein 1 (204 aa).

Residues 1–11 (MLTLDIDPYTI) are Lumenal-facing. A helical membrane pass occupies residues 12–31 (LVTSFLILAIQKLVTVIGKQ). Topologically, residues 32 to 116 (KIQLYIWQIY…RIDSITKLAI (85 aa)) are cytoplasmic. The stretch at 78 to 113 (AKWTKINRALDKLKLEVQELNETIAGEKTRIDSITK) forms a coiled coil. A helical transmembrane segment spans residues 117–137 (TLILTLPIWFLRIFCRKTALL). Over 138–161 (YIRKGILPAYLEWWLALPFFKSGT) the chain is Lumenal. Residues 162-178 (IGLTCWMFVVNSVLSNL) form a helical membrane-spanning segment. Residues 179 to 204 (IFLISFPFTQKVERPIKPKNEQKTES) are Cytoplasmic-facing.

It belongs to the WRB/GET1 family. As to quaternary structure, component of the Golgi to ER traffic (GET) complex, which is composed of GET1, GET2 and GET3. Within the complex, GET1 and GET2 form a heterotetramer which is stabilized by phosphatidylinositol binding and which binds to the GET3 homodimer.

The protein localises to the endoplasmic reticulum membrane. It is found in the golgi apparatus membrane. Functionally, required for the post-translational delivery of tail-anchored (TA) proteins to the endoplasmic reticulum. Together with GET2, acts as a membrane receptor for soluble GET3, which recognizes and selectively binds the transmembrane domain of TA proteins in the cytosol. The GET complex cooperates with the HDEL receptor ERD2 to mediate the ATP-dependent retrieval of resident ER proteins that contain a C-terminal H-D-E-L retention signal from the Golgi to the ER. The polypeptide is Golgi to ER traffic protein 1 (Lodderomyces elongisporus (strain ATCC 11503 / CBS 2605 / JCM 1781 / NBRC 1676 / NRRL YB-4239) (Yeast)).